Consider the following 192-residue polypeptide: Peroxiredoxin tpx1 (192 aa).

Residues 3–161 (LQIGKPAPDF…ALRLLDAFQF (159 aa)) enclose the Thioredoxin domain. The active-site Cysteine sulfenic acid (-SOH) intermediate is Cys48. Phosphoserine occurs at positions 105 and 148.

The protein belongs to the peroxiredoxin family. AhpC/Prx1 subfamily. Homodimer; disulfide-linked, upon oxidation. Interacts with srx1 in response to oxidative stress. Interacts with pap1 via transient disulfide linkages. Post-translationally, the enzyme can be inactivated by further oxidation of the cysteine sulfenic acid (C(P)-SOH) to sulphinic acid (C(P)-SO2H) instead of its condensation to a disulfide bond. It can be reactivated by forming a transient disulfide bond with sulfiredoxin srx1, which reduces the cysteine sulfinic acid in an ATP- and Mg-dependent manner.

It is found in the cytoplasm. The protein resides in the nucleus. It catalyses the reaction a hydroperoxide + [thioredoxin]-dithiol = an alcohol + [thioredoxin]-disulfide + H2O. Thiol-specific peroxidase that catalyzes the reduction of hydrogen peroxide and organic hydroperoxides to water and alcohols, respectively. Plays a role in cell protection against oxidative stress by detoxifying peroxides and as sensor of hydrogen peroxide-mediated signaling events. Relays hydrogen peroxide as a signal to the transcription factor pap1 by inducing the formation of intramolecular disulfide bonds in pap1, which causes its nuclear accumulation and activation. Reduced by srx1 and this regulation acts as a molecular switch controlling the transcriptional response to hydrogen peroxide. The chain is Peroxiredoxin tpx1 (tpx1) from Schizosaccharomyces pombe (strain 972 / ATCC 24843) (Fission yeast).